The primary structure comprises 138 residues: Transcription factor Atoh7-a (138 aa).

Positions 33-85 (KRRLAANARERRRMQGLNTAFDSLRKVVPQWGEDKQLSKYETLQMALSYIMAL) constitute a bHLH domain.

Its subcellular location is the nucleus. The protein localises to the perikaryon. It is found in the cell projection. The protein resides in the axon. Its function is as follows. Transcription factor that binds to DNA at the consensus sequence 5'-CAG[GC]TG-3'. Positively regulates the determination of retinal ganglion cell fate and formation of the optic nerve and retino-hypothalamic tract. Required for retinal circadian rhythm photoentrainment. Plays a role in brainstem auditory signaling and binaural processing. Regulates the differentiation of olfactory receptor neurons. During retinal neurogenesis, activates the transcription of several genes such as brn3d, coe3, cbfa2t2, glis2, elrC and xgadd45-gamma. The polypeptide is Transcription factor Atoh7-a (Xenopus laevis (African clawed frog)).